Consider the following 419-residue polypeptide: MASSNRRVLVNGGGPAGAVTAFWLAKGGFEVVVTERSMSRPYGQGVDVTGRASDIIKKMGLEQRIRDSTTGEAGLTVVDDQGEDVAPPLGTAPIEGGTASVTQEIEIMRRDLTKIFVDAAEALPNVTFRYGCTVDEVQQHEKSITAVLSDTGKPEDFTAIIGADGLGSAIRKLTFDPEINRRSVSPTNTYVAFFSIPGDPKYDTPVGKLQHANKGRGILVRPIDKKGTQRSCYLMSQSDSQELAQVARTGSQEDQKALLDNRFREFTGPLGKRAVEGMHSADDFYFTRIVQIKLDSWHSGRAALVGDAGYSPSPLTGQGTTLAIIGAYVLAGEMAKSPDDLERAFTSYYAILNKFVSESQEIPFGGQAPKLILPQSDWGIWLLRTFYKIISWTGIWRLLNFGNETVKVELPEYDFGGLD.

The protein belongs to the aromatic-ring hydroxylase family. KMO subfamily.

Its pathway is mycotoxin biosynthesis. Its function is as follows. Monooxygenase; part of the gene cluster that mediates the biosynthesis of cercosporin, a light-activated, non-host-selective toxin. The perylenequinone chromophore of cercosporin absorbs light energy to attain an electronically-activated triplet state and produces active oxygen species such as the hydroxyl radical, superoxide, hydrogen peroxide or singlet oxygen upon reaction with oxygen molecules. These reactive oxygen species cause damage to various cellular components including lipids, proteins and nucleic acids. The first step of cercosporin biosynthesis is performed by the polyketide synthase CTB1 which catalyzes the formation of nor-toralactone. The starter unit acyltransferase (SAT) domain of CTB1 initiates polyketide extension by the selective utilization of acetyl-CoA, which is elongated to the heptaketide in the beta-ketoacyl synthase (KS) domain by successive condensations with six malonyl units introduced by the malonyl acyltransferase (MAT) domain. The product template (PT) domain catalyzes C4-C9 and C2-C11 aldol cyclizations and dehydrations to a trihydroxynaphthalene, which is thought to be delivered to the thioesterase (TE) domain for product release. The bifunctional enzyme CTB3 then methylates nor-toralactone to toralactone before conducting an unusual oxidative aromatic ring opening. The O-methyltransferase CTB2 further methylates the nascent OH-6 of the CBT3 product, blocking further oxidation at this site before the reductase CTB6 reduces the 2-oxopropyl ketone at position C7, giving naphthalene. The FAD-dependent monooxygenase CTB5 in concert with the multicopper oxidase CTB12 are responsible for homodimerization of naphthalene with CTB7 installing the dioxepine moiety, finally producing cercosporin. The fasciclin domain-containing protein CTB11 might act with CTB5 and CTB12 whereas the roles of CTB9 and CTB10 have still to be elucidated. This is Monooxygenase CTB7 from Cercospora beticola (Sugarbeet leaf spot fungus).